Here is a 1119-residue protein sequence, read N- to C-terminus: DISARM protein DrmA (1119 aa).

The tract at residues 73-95 (PESGMEEDVEQQRNSELEQEAEE) is disordered. The Helicase C-terminal domain maps to 813-986 (ELSKYIDPYR…ATPYASRARD (174 aa)).

This sequence belongs to the helicase family.

Its subcellular location is the cytoplasm. Functionally, component of antiviral defense system DISARM (defense island system associated with restriction-modification), composed of DrmE, DrmA, DrmB, DrmC and DrmMII. DISARM is probably a multi-gene restriction module, this subunit is probably a helicase. Expression of DISARM in B.subtilis (strain BEST7003) confers resistance to phages Nf, phi29, phi105, phi3T, SPO1, SPR and SPP1. Protection is over 10(7)-fold against phi3T, 10(4)-10(5)-fold against Nf, phi29, phi105 and SPR, 100-fold against SPO1 and 10-fold against SPP1. DISARM does not interfere with phage adsorption, but instead interferes with (phi3T) DNA replication early in its cycle, preventing replication, circularization and lysogeny and probably causes phage DNA degradation (DNA is degraded in SPP1-infected cells). The protein is DISARM protein DrmA of Bacillus paralicheniformis (strain ATCC 9945a / NCIMB 11709 / CD-2).